We begin with the raw amino-acid sequence, 218 residues long: Cytidylate kinase (218 aa).

11–19 (GPGASGKGT) contributes to the ATP binding site.

This sequence belongs to the cytidylate kinase family. Type 1 subfamily.

The protein resides in the cytoplasm. It catalyses the reaction CMP + ATP = CDP + ADP. It carries out the reaction dCMP + ATP = dCDP + ADP. This chain is Cytidylate kinase, found in Neisseria meningitidis serogroup B (strain ATCC BAA-335 / MC58).